The chain runs to 319 residues: Tyrosine--tRNA ligase (319 aa).

Tyr40 serves as a coordination point for L-tyrosine. The 'HIGH' region motif lies at 45–53 (PSGRIHMGH). Positions 159, 163, 166, and 181 each coordinate L-tyrosine. A 'KMSKS' region motif is present at residues 216–220 (KMSSS). Residue Ser219 coordinates ATP.

It belongs to the class-I aminoacyl-tRNA synthetase family. TyrS type 3 subfamily. Homodimer.

It is found in the cytoplasm. The enzyme catalyses tRNA(Tyr) + L-tyrosine + ATP = L-tyrosyl-tRNA(Tyr) + AMP + diphosphate + H(+). Functionally, catalyzes the attachment of tyrosine to tRNA(Tyr) in a two-step reaction: tyrosine is first activated by ATP to form Tyr-AMP and then transferred to the acceptor end of tRNA(Tyr). The sequence is that of Tyrosine--tRNA ligase from Methanococcus maripaludis (strain DSM 14266 / JCM 13030 / NBRC 101832 / S2 / LL).